Reading from the N-terminus, the 117-residue chain is Ig heavy chain V region G4 (117 aa).

The signal sequence occupies residues 1–19 (MTHWLCFTLALVAVRGVLS). The framework-1 stretch occupies residues 20 to 49 (EIQLVESGGAIRKPGDSLRLSCKASGFTFS). A disulfide bridge links Cys-41 with Cys-115. The tract at residues 50-54 (DTWMA) is complementarity-determining-1. A framework-2 region spans residues 55 to 68 (WARQPPGKGLQWVG). The segment at 69–85 (EINGNSETIRYAPEVKG) is complementarity-determining-2. Residues 86–117 (RLTISRDNTQNLLFLQISSLKPEDTATYYCAR) form a framework-3 region.

This is Ig heavy chain V region G4 (G4) from Caiman crocodilus (Spectacled caiman).